Reading from the N-terminus, the 502-residue chain is Glutamate decarboxylase (502 aa).

An N6-(pyridoxal phosphate)lysine modification is found at Lys278. The segment at 471-502 (GLHHFHMDTVETQKDIIKHWRKIAGKKTSGVC) is calmodulin-binding.

It belongs to the group II decarboxylase family. The cofactor is pyridoxal 5'-phosphate.

The enzyme catalyses L-glutamate + H(+) = 4-aminobutanoate + CO2. Its function is as follows. Catalyzes the production of GABA. The calmodulin-binding is calcium-dependent and it is proposed that this may, directly or indirectly, form a calcium regulated control of GABA biosynthesis. The sequence is that of Glutamate decarboxylase from Solanum lycopersicum (Tomato).